Here is a 380-residue protein sequence, read N- to C-terminus: E3 ubiquitin-protein ligase RNF13 (380 aa).

Positions 1–34 (MLLSIGMLMLSATQVYTILTVQLFAFLNLLPVEA) are cleaved as a signal peptide. Topologically, residues 35-182 (DILAYNFENA…VPEFSLPLEY (148 aa)) are lumenal. The PA domain occupies 65 to 160 (KGFLINSKPE…GESSANSLKD (96 aa)). An N-linked (GlcNAc...) asparagine glycan is attached at Asn88. The chain crosses the membrane as a helical span at residues 183–203 (YLIPFLIIVGICLILIVIFMI). At 204–380 (TKFVQDRHRA…ERDYNIANTV (177 aa)) the chain is on the cytoplasmic side. The RING-type; atypical zinc finger occupies 240 to 282 (CAICLDEYEDGDKLRILPCSHAYHCKCVDPWLTKTKKTCPVCK). Positions 285–380 (VVPSQGDSDS…ERDYNIANTV (96 aa)) are disordered. 2 stretches are compositionally biased toward acidic residues: residues 292–304 (SDSDTDSSQEENE) and 339–356 (SDYEEDDNDTDSSDAENE).

As to quaternary structure, interacts with ERN1. In terms of processing, autoubiquitinated.

The protein localises to the endoplasmic reticulum membrane. The protein resides in the late endosome membrane. It localises to the lysosome membrane. Its subcellular location is the nucleus inner membrane. The enzyme catalyses S-ubiquitinyl-[E2 ubiquitin-conjugating enzyme]-L-cysteine + [acceptor protein]-L-lysine = [E2 ubiquitin-conjugating enzyme]-L-cysteine + N(6)-ubiquitinyl-[acceptor protein]-L-lysine.. It functions in the pathway protein modification; protein ubiquitination. Functionally, E3 ubiquitin-protein ligase that regulates cell proliferation. Involved in apoptosis regulation. Mediates ER stress-induced activation of JNK signaling pathway and apoptosis by promoting ERN1 activation and splicing of XBP1 mRNA. Also involved in protein trafficking and localization. This is E3 ubiquitin-protein ligase RNF13 (RNF13) from Bos taurus (Bovine).